We begin with the raw amino-acid sequence, 258 residues long: E3 ubiquitin ligase TRIM40 (258 aa).

An RING-type zinc finger spans residues 14-56 (CPICQESLKEAVSTNCGHLFCRVCLTQHVEKASASGVFCCPLC). The segment at 66–107 (GTGYICPNHQKRVCRFCEESRLLLCVECLVSPEHMSHHELTI) adopts a B box-type zinc-finger fold. Positions 71, 74, 93, and 99 each coordinate Zn(2+). Positions 107–159 (IENALSHYKERLNRRSRKLRKDIAELQRLKAQQEKKLQALQFQVDHGNHRLEA) form a coiled coil.

It belongs to the TRIM/RBCC family. As to quaternary structure, interacts with NEDD8. Highly expressed in normal gastrointestinal epithelia but that is down-regulated in gastrointestinal carcinomas and chronic inflammatory lesions of the gastrointestinal tract.

The catalysed reaction is S-ubiquitinyl-[E2 ubiquitin-conjugating enzyme]-L-cysteine + [acceptor protein]-L-lysine = [E2 ubiquitin-conjugating enzyme]-L-cysteine + N(6)-ubiquitinyl-[acceptor protein]-L-lysine.. In terms of biological role, E3 ubiquitin-protein ligase that plays a role in the limitation of the innate immune response. Mediates inhibition of the RLR signaling pathway by ubiquitinating RIGI and IFIH1 receptors, leading to their proteasomal degradation. Also promotes the neddylation of IKBKG/NEMO, stabilizing NFKBIA, and thereby inhibiting of NF-kappa-B nuclear translocation and activation. This is E3 ubiquitin ligase TRIM40 (TRIM40) from Homo sapiens (Human).